The primary structure comprises 420 residues: Serine palmitoyltransferase (420 aa).

A compositionally biased stretch (polar residues) spans 1 to 21 (MKHNLQDNLQGEQMANTNSNG). Positions 1 to 25 (MKHNLQDNLQGEQMANTNSNGGKKP) are disordered. Pyridoxal 5'-phosphate contacts are provided by residues 132-133 (GM), His-233, Thr-261, and Ser-263. Lys-264 carries the post-translational modification N6-(pyridoxal phosphate)lysine.

This sequence belongs to the class-II pyridoxal-phosphate-dependent aminotransferase family. In terms of assembly, homodimer. Requires pyridoxal 5'-phosphate as cofactor.

The protein localises to the cytoplasm. It localises to the cell inner membrane. The catalysed reaction is L-serine + hexadecanoyl-CoA + H(+) = 3-oxosphinganine + CO2 + CoA. It functions in the pathway lipid metabolism; sphingolipid metabolism. Significantly inhibited by palmitoyl-CoA concentrations greater than 100 uM. Catalyzes the condensation of L-serine with palmitoyl-CoA (hexadecanoyl-CoA) to produce 3-oxosphinganine. This is Serine palmitoyltransferase from Bacteriovorax stolpii (Bdellovibrio stolpii).